The following is a 185-amino-acid chain: Ribosome-recycling factor (185 aa).

This sequence belongs to the RRF family.

Its subcellular location is the cytoplasm. Responsible for the release of ribosomes from messenger RNA at the termination of protein biosynthesis. May increase the efficiency of translation by recycling ribosomes from one round of translation to another. This Xanthomonas euvesicatoria pv. vesicatoria (strain 85-10) (Xanthomonas campestris pv. vesicatoria) protein is Ribosome-recycling factor.